A 177-amino-acid polypeptide reads, in one-letter code: Large ribosomal subunit protein uL6 (177 aa).

Belongs to the universal ribosomal protein uL6 family. Part of the 50S ribosomal subunit.

In terms of biological role, this protein binds to the 23S rRNA, and is important in its secondary structure. It is located near the subunit interface in the base of the L7/L12 stalk, and near the tRNA binding site of the peptidyltransferase center. The polypeptide is Large ribosomal subunit protein uL6 (Halorhodospira halophila (strain DSM 244 / SL1) (Ectothiorhodospira halophila (strain DSM 244 / SL1))).